Consider the following 413-residue polypeptide: Hemolin (413 aa).

The first 19 residues, 1–19 (MAFKSIAVLSACIIVGSAL), serve as a signal peptide directing secretion. 4 Ig-like C2-type domains span residues 25–112 (PVLK…RVIS), 122–211 (PAKT…EEVV), 233–322 (PQYV…LKLT), and 327–413 (PKYE…VQVN). Disulfide bonds link Cys46/Cys97, Cys140/Cys199, Cys252/Cys305, and Cys349/Cys395. N-linked (GlcNAc...) asparagine glycosylation occurs at Asn283.

This sequence belongs to the hemolin family. Hemolymph.

It localises to the secreted. Its subcellular location is the extracellular space. Its function is as follows. Insect-immune protein. Forms a protein complex at the bacterial surface. Can inhibit hemocyte aggregation. The polypeptide is Hemolin (Hyalophora cecropia (Cecropia moth)).